The chain runs to 515 residues: Fibril protein (515 aa).

At methionine 1 the chain carries Blocked amino end (Met). 4 helical regions span residues 21–34, 206–228, 357–376, and 426–440; these read VKKYWWKNCVIQHV, HKFKMYETVNTLKYLLRRLFNLL, KIETVETVANEIAAAIAEKC, and SNEFLKYLNEALKDV.

The protein localises to the cytoplasm. Its subcellular location is the cytoskeleton. Functionally, acts as a cytoskeletal structure involved in the shape and motility of spiroplasmas. This chain is Fibril protein, found in Spiroplasma citri.